The chain runs to 472 residues: Glutamate synthase [NADPH] small chain (472 aa).

Positions 41–72 (QDAAAQAHRCLHCGNPYCEWKCPVHNYIPNWL) constitute a 4Fe-4S ferredoxin-type domain. Cys50, Cys53, Cys58, and Cys62 together coordinate [4Fe-4S] cluster.

[4Fe-4S] cluster serves as cofactor.

The catalysed reaction is 2 L-glutamate + NADP(+) = L-glutamine + 2-oxoglutarate + NADPH + H(+). Its pathway is amino-acid biosynthesis; L-glutamate biosynthesis via GLT pathway; L-glutamate from 2-oxoglutarate and L-glutamine (NADP(+) route): step 1/1. It participates in energy metabolism; nitrogen metabolism. Catalyzes the conversion of L-glutamine and 2-oxoglutarate into two molecules of L-glutamate. This chain is Glutamate synthase [NADPH] small chain, found in Halomonas elongata (strain ATCC 33173 / DSM 2581 / NBRC 15536 / NCIMB 2198 / 1H9).